A 218-amino-acid polypeptide reads, in one-letter code: MAEKVVVIYSGGMDSFTVLNRAKKDGKEVFALSFDYGQRHVKELECASIVCKELAVNHKVIDISAINQLLAGSSLTDDIDIPEGHYEAESMKSTVVPNRNMILLSLAVAYAVSVGAEQVYYGAHSGDHAIYPDCRPEFVEKMNDVCKIANYESVEIFSPYLSVDKTAILADGIKMGLDYSNTWTCYNGREKACGKCGSCQERLEAFEENNATDPIPYE.

9–19 (YSGGMDSFTVL) is a binding site for ATP. 4 residues coordinate Zn(2+): Cys-185, Cys-193, Cys-196, and Cys-199.

The protein belongs to the QueC family. The cofactor is Zn(2+).

The enzyme catalyses 7-carboxy-7-deazaguanine + NH4(+) + ATP = 7-cyano-7-deazaguanine + ADP + phosphate + H2O + H(+). The protein operates within purine metabolism; 7-cyano-7-deazaguanine biosynthesis. Its function is as follows. Catalyzes the ATP-dependent conversion of 7-carboxy-7-deazaguanine (CDG) to 7-cyano-7-deazaguanine (preQ(0)). The chain is 7-cyano-7-deazaguanine synthase 1 from Colwellia psychrerythraea (strain 34H / ATCC BAA-681) (Vibrio psychroerythus).